A 642-amino-acid polypeptide reads, in one-letter code: tRNA uridine 5-carboxymethylaminomethyl modification enzyme MnmG (642 aa).

FAD is bound by residues 10–15, Val122, and Ser177; that span reads GAGHAG. 269–283 lines the NAD(+) pocket; the sequence is SARYCPSLEDKVMRF. Position 366 (Gln366) interacts with FAD.

The protein belongs to the MnmG family. Homodimer. Heterotetramer of two MnmE and two MnmG subunits. Requires FAD as cofactor.

It is found in the cytoplasm. NAD-binding protein involved in the addition of a carboxymethylaminomethyl (cmnm) group at the wobble position (U34) of certain tRNAs, forming tRNA-cmnm(5)s(2)U34. This chain is tRNA uridine 5-carboxymethylaminomethyl modification enzyme MnmG, found in Syntrophobacter fumaroxidans (strain DSM 10017 / MPOB).